The primary structure comprises 361 residues: Phosphoserine aminotransferase (361 aa).

Arg43 contacts L-glutamate. Pyridoxal 5'-phosphate-binding residues include Trp103, Thr153, Asp173, and Gln196. Lys197 bears the N6-(pyridoxal phosphate)lysine mark. 238–239 (NT) serves as a coordination point for pyridoxal 5'-phosphate.

This sequence belongs to the class-V pyridoxal-phosphate-dependent aminotransferase family. SerC subfamily. In terms of assembly, homodimer. It depends on pyridoxal 5'-phosphate as a cofactor.

The protein resides in the cytoplasm. The catalysed reaction is O-phospho-L-serine + 2-oxoglutarate = 3-phosphooxypyruvate + L-glutamate. The enzyme catalyses 4-(phosphooxy)-L-threonine + 2-oxoglutarate = (R)-3-hydroxy-2-oxo-4-phosphooxybutanoate + L-glutamate. It participates in amino-acid biosynthesis; L-serine biosynthesis; L-serine from 3-phospho-D-glycerate: step 2/3. Its pathway is cofactor biosynthesis; pyridoxine 5'-phosphate biosynthesis; pyridoxine 5'-phosphate from D-erythrose 4-phosphate: step 3/5. In terms of biological role, catalyzes the reversible conversion of 3-phosphohydroxypyruvate to phosphoserine and of 3-hydroxy-2-oxo-4-phosphonooxybutanoate to phosphohydroxythreonine. The protein is Phosphoserine aminotransferase of Hahella chejuensis (strain KCTC 2396).